Here is a 359-residue protein sequence, read N- to C-terminus: DNA replication and repair protein RecF (359 aa).

30 to 37 (GPNGSGKT) provides a ligand contact to ATP.

Belongs to the RecF family.

Its subcellular location is the cytoplasm. In terms of biological role, the RecF protein is involved in DNA metabolism; it is required for DNA replication and normal SOS inducibility. RecF binds preferentially to single-stranded, linear DNA. It also seems to bind ATP. The sequence is that of DNA replication and repair protein RecF from Aliivibrio salmonicida (strain LFI1238) (Vibrio salmonicida (strain LFI1238)).